Consider the following 320-residue polypeptide: Endolytic peptidoglycan transglycosylase RlpA (320 aa).

It belongs to the RlpA family.

Lytic transglycosylase with a strong preference for naked glycan strands that lack stem peptides. The chain is Endolytic peptidoglycan transglycosylase RlpA from Rickettsia prowazekii (strain Madrid E).